Consider the following 370-residue polypeptide: 3-dehydroquinate synthase (370 aa).

NAD(+) contacts are provided by residues 108–112 (GVIGD), 132–133 (TT), K145, and K154. Zn(2+) is bound by residues E187, H249, and H267.

This sequence belongs to the sugar phosphate cyclases superfamily. Dehydroquinate synthase family. Requires Co(2+) as cofactor. Zn(2+) is required as a cofactor. It depends on NAD(+) as a cofactor.

Its subcellular location is the cytoplasm. The catalysed reaction is 7-phospho-2-dehydro-3-deoxy-D-arabino-heptonate = 3-dehydroquinate + phosphate. It functions in the pathway metabolic intermediate biosynthesis; chorismate biosynthesis; chorismate from D-erythrose 4-phosphate and phosphoenolpyruvate: step 2/7. Functionally, catalyzes the conversion of 3-deoxy-D-arabino-heptulosonate 7-phosphate (DAHP) to dehydroquinate (DHQ). The polypeptide is 3-dehydroquinate synthase (Cereibacter sphaeroides (strain ATCC 17025 / ATH 2.4.3) (Rhodobacter sphaeroides)).